Consider the following 647-residue polypeptide: Auxin efflux carrier component 2 (647 aa).

The Extracellular portion of the chain corresponds to 1–7 (MITGKDM). The chain crosses the membrane as a helical span at residues 8–28 (YDVLAAMVPLYVAMILAYGSV). Residues 29 to 38 (RWWGIFTPDQ) are Cytoplasmic-facing. A helical membrane pass occupies residues 39–59 (CSGINRFVAVFAVPLLSFHFI). Val51 is a (indol-3-yl)acetate binding site. Residues 60 to 68 (SSNDPYAMN) are Extracellular-facing. Residues 69-89 (YHFLAADSLQKVVILAALFLW) form a helical membrane-spanning segment. Residues 90 to 100 (QAFSRRGSLEW) are Cytoplasmic-facing. The chain crosses the membrane as a helical span at residues 101 to 121 (MITLFSLSTLPNTLVMGIPLL). Asn112 and Leu114 together coordinate (indol-3-yl)acetate. The Extracellular portion of the chain corresponds to 122–131 (RAMYGDFSGN). Residues 132 to 152 (LMVQIVVLQSIIWYTLMLFLF) form a helical membrane-spanning segment. Tyr145 is a binding site for (indol-3-yl)acetate. Residues 153 to 507 (EFRGAKLLIS…LIRNPNTYSS (355 aa)) lie on the Cytoplasmic side of the membrane. Phosphoserine occurs at positions 237, 258, and 310. Residues 339 to 380 (SVPSYPPPNPMFTGSTSGASGVKKKESGGGGSGGGVGVGGQN) are disordered. The residue at position 354 (Thr354) is a Phosphothreonine. Gly residues predominate over residues 366–378 (GGGGSGGGVGVGG). Ser393 carries the phosphoserine modification. 2 disordered regions span residues 397–420 (EANA…KVSI) and 440–481 (PGRK…QQMP). The chain crosses the membrane as a helical span at residues 508 to 528 (LFGLAWSLVSFKWNIKMPTIM). The Extracellular portion of the chain corresponds to 529 to 531 (SGS). Residues 532–552 (ISILSDAGLGMAMFSLGLFMA) traverse the membrane as a helical segment. The Cytoplasmic portion of the chain corresponds to 553 to 568 (LQPKIIACGKSVAGFA). The helical transmembrane segment at 569 to 589 (MAVRFLTGPAVIAATSIAIGI) threads the bilayer. The Extracellular portion of the chain corresponds to 590 to 592 (RGD). Residues 593-613 (LLHIAIVQAALPQGIVPFVFA) traverse the membrane as a helical segment. Ile607 and Val608 together coordinate (indol-3-yl)acetate. The Cytoplasmic portion of the chain corresponds to 614-626 (KEYNVHPDILSTA). Residues 627–647 (VIFGMLVALPVTVLYYVLLGL) form a helical membrane-spanning segment.

This sequence belongs to the auxin efflux carrier (TC 2.A.69.1) family. As to quaternary structure, homodimer. Interacts with FYPP1 and FYPP3. Component of a complex made of PINs (e.g. PIN1 and PIN2), MAB4/MELs (e.g. NPY1/MAB4 and NPY5/MEL1) and AGC kinases (e.g. D6PK and PID) at the plasma membrane. Binds directly to NPY1/MAB4, NPY5/MEL1 and PID. As to expression, root-specific. Localized to the cortex, epidermis and lateral root cap, predominantly at the upper side of cells.

The protein resides in the cell membrane. Functionally, acts as a component of the auxin efflux carrier. Seems to be involved in the root-specific auxin transport, and mediates the root gravitropism. Its particular localization suggests a role in the translocation of auxin towards the elongation zone. Recrutes NPY proteins (e.g. NPY1/MAB4 and NPY5/MEL1) to the plasma membrane in a polar basal localization in root epidermis; this activity is optimized by AGC kinases-mediated (e.g. D6PK and PID) phosphorylation that limits their lateral diffusion-based escape. The sequence is that of Auxin efflux carrier component 2 from Arabidopsis thaliana (Mouse-ear cress).